The following is a 505-amino-acid chain: Flagellin (505 aa).

Belongs to the bacterial flagellin family.

Its subcellular location is the secreted. The protein localises to the bacterial flagellum. Its function is as follows. Flagellin is the subunit protein which polymerizes to form the filaments of bacterial flagella. The polypeptide is Flagellin (fliC) (Salmonella rostock).